Consider the following 743-residue polypeptide: Merozoite surface protein 9 (743 aa).

An N-terminal signal peptide occupies residues 1-23 (MMNMKIVLFSLLLFVIRWNIISC). An interaction with MSP1 and host SLC4A1/Band 3 region spans residues 77–235 (KELLKEKQYT…VNDEDDVNDE (159 aa)). Disordered regions lie at residues 202 to 282 (KSQG…ATAY), 459 to 487 (DNQAVDTKSMEEPKVKAQPALRGVEPTED), 512 to 540 (NNTPNVVPPTQSKKKNKNETVSGMDENFD), and 666 to 743 (VDAL…EESK). Positions 211 to 224 (SQNQNENNDNQKYQ) are enriched in polar residues. 8 consecutive repeat copies span residues 226–231 (VNDEDD), 232–237 (VNDEED), 238–243 (TNDDED), 244–249 (TNDEED), 250–255 (TNDDED), 256–261 (TNDDED), 262–267 (TNDEED), and 268–273 (TNDEED). Residues 226–273 (VNDEDDVNDEEDTNDDEDTNDEEDTNDDEDTNDDEDTNDEEDTNDEED) form an 8 X 6 AA tandem repeats of [VT]-N-D-[ED]-[ED]-D region. Over residues 226–274 (VNDEDDVNDEEDTNDDEDTNDEEDTNDDEDTNDDEDTNDEEDTNDEEDH) the composition is skewed to acidic residues. The segment at 364 to 528 (LKDNLINYEF…PPTQSKKKNK (165 aa)) is interaction with MSP1 and host SLC4A1/Band 3. Residues 459-473 (DNQAVDTKSMEEPKV) show a composition bias toward basic and acidic residues. The segment covering 512–521 (NNTPNVVPPT) has biased composition (low complexity). Positions 644-733 (NQETEEEMEK…QEEEEEEEIV (90 aa)) form a coiled coil. The span at 672 to 721 (KNKEEEEKEKEKEEKEKEEKEKEKEEKEKEEKEKEEKEKEEKEEEKKEKE) shows a compositional bias: basic and acidic residues. Residues 722-733 (EEQEEEEEEEIV) are compositionally biased toward acidic residues.

It belongs to the plasmodium ABRA family. As to quaternary structure, forms a complex composed of MSP1, MSP6, MSP7, MSP9 and MSP3; within the complex, MSP6 and MSP9 mediate the binding to the host erythrocyte. Interacts with MSP1 subunits p19 and p42; the interaction is direct. Interacts with host SLC4A1/Band 3 protein (via the 5ABC region). MSP1 subunits p19 or p42, and MSP9 form a co-ligand complex that interacts with host SLC4A1/Band 3 protein. Not glycosylated.

The protein resides in the cell membrane. It localises to the parasitophorous vacuole lumen. It is found in the secreted. During the asexual blood stage, involved in the sialic acid-independent (SAID) merozoite invasion of host erythrocytes by binding to host SLC4A1/Band 3 protein on the surface of the host erythrocyte. The protein is Merozoite surface protein 9 of Plasmodium falciparum (isolate 3D7).